Reading from the N-terminus, the 627-residue chain is uncharacterized protein (627 aa).

Residues 1–32 (MVDDSNYLTPHETALAVVATAMKKARLQLDTL) lie on the Extracellular side of the membrane. Residues 33–53 (LINSILGGVLFSSGSFLLVAV) traverse the membrane as a helical segment. The Cytoplasmic segment spans residues 54 to 66 (YSEDPDIVARNPG). A helical transmembrane segment spans residues 67-87 (IVNLITGVNFAMGLFYVVMMG). Over 88–113 (ADLFNSNILFFSVGVLRKAVTIYDLM) the chain is Extracellular. The chain crosses the membrane as a helical span at residues 114–134 (ISWVVSWLGNIAGSLFVSYLF). At 135–165 (GHLSGISSQKLWIIGSRQIIEQKVSYSFVQT) the chain is on the cytoplasmic side. The chain crosses the membrane as a helical span at residues 166 to 186 (FLKGIACNFFVCLAIYLQLMA). Residues 187–192 (KPIHVK) lie on the Extracellular side of the membrane. A helical transmembrane segment spans residues 193–213 (FILMSFPIIDFIGIGFTHVVG). Over 214 to 218 (DMSAS) the chain is Cytoplasmic. A helical membrane pass occupies residues 219–239 (FIAMLNGANVSVGKYIWKLLI). The Extracellular portion of the chain corresponds to 240 to 245 (PASLGN). The helical transmembrane segment at 246–266 (IVGGLFFSAVVPFYLHLVVVE) threads the bilayer. The Cytoplasmic segment spans residues 267–627 (RDRKRLSLPE…FYNRHTSPQL (361 aa)). Residue T305 is modified to Phosphothreonine. The segment at 512–537 (PPILPRTTQDTFPHNAPASSPAYTDD) is disordered. Polar residues predominate over residues 517-533 (RTTQDTFPHNAPASSPA). S546 bears the Phosphoserine mark. T588 carries the phosphothreonine modification. Residues 605–614 (STTRRQKITE) show a composition bias toward basic and acidic residues. Residues 605-627 (STTRRQKITEPKNFYNRHTSPQL) are disordered.

Belongs to the FNT transporter (TC 1.A.16) family.

It localises to the membrane. This is an uncharacterized protein from Saccharomyces cerevisiae (strain ATCC 204508 / S288c) (Baker's yeast).